Consider the following 527-residue polypeptide: Putative ribose/galactose/methyl galactoside import ATP-binding protein 2 (527 aa).

Residues 1-31 are disordered; it reads MFTARVARPMAGDDAPAASSGSTGSSAPPAS. The span at 12–31 shows a compositional bias: low complexity; the sequence is GDDAPAASSGSTGSSAPPAS. 2 ABC transporter domains span residues 38–274 and 284–523; these read LEVR…VGRE and VPIG…RIMD. 70–77 serves as a coordination point for ATP; sequence GENGAGKS.

This sequence belongs to the ABC transporter superfamily. Carbohydrate importer 2 (CUT2) (TC 3.A.1.2) family.

Its subcellular location is the cell inner membrane. The enzyme catalyses D-ribose(out) + ATP + H2O = D-ribose(in) + ADP + phosphate + H(+). It carries out the reaction D-galactose(out) + ATP + H2O = D-galactose(in) + ADP + phosphate + H(+). Its function is as follows. Part of an ABC transporter complex involved in carbohydrate import. Could be involved in ribose, galactose and/or methyl galactoside import. Responsible for energy coupling to the transport system. The protein is Putative ribose/galactose/methyl galactoside import ATP-binding protein 2 of Burkholderia lata (strain ATCC 17760 / DSM 23089 / LMG 22485 / NCIMB 9086 / R18194 / 383).